A 363-amino-acid polypeptide reads, in one-letter code: MSFGKFFNTAVSAWMSQEGPNSDIVLSSRIRLARNIVDFRFPTLFSSEEAKQIVALFERAFVHRPYGEAGRFELLKMSELQPIEKRVLVEKHLISPHLAEDSPFGACLLSENEEISIMINEEDHIRIQCLFPGLQLAEALEAASELDDWIEGHVNYAFDERLGYLTSCPTNVGTGLRASVMMHLPALVLTQQINRIIPAINQLGLVVRGTYGEGSEALGNIFQISNQITLGKSEEDIVADLHTIVEQLIAQERAARQALVKTLGIQLEDKVFRSYGILANCRVIDSKEAAQCLSDVRLGIDLGYIKNVSRNILNELMILTQPGFLQQYAGGVLRPEERDVRRAALIRERLRMETRRKMEGDER.

The Phosphagen kinase C-terminal domain occupies 24–255 (IVLSSRIRLA…EQLIAQERAA (232 aa)). Residues 27–31 (SSRIR), His-92, Arg-126, 177–181 (RASVM), and 208–213 (RGTYGE) contribute to the ATP site. The RDXXRA motif of the pArg binding pocket involved in allosteric regulation motif lies at 338–343 (RDVRRA).

Belongs to the ATP:guanido phosphotransferase family. Homodimer. Dimerization is important for full catalytic activity.

The enzyme catalyses L-arginyl-[protein] + ATP = N(omega)-phospho-L-arginyl-[protein] + ADP + H(+). With respect to regulation, appears to be allosterically activated by the binding of pArg-containing polypeptides to the pArg-binding pocket localized in the C-terminal domain of McsB. Functionally, catalyzes the specific phosphorylation of arginine residues in a large number of proteins. Is part of the bacterial stress response system, where it is involved in regulating the global heat shock repressor CtsR; phosphorylates arginine residues in the winged helix-turn-helix domain of CtsR, thereby preventing its binding to DNA and consequently inducing the expression of repressed genes. Protein arginine phosphorylation has a physiologically important role and is involved in the regulation of many critical cellular processes, such as protein homeostasis, motility, competence, and stringent and stress responses, by regulating gene expression and protein activity. Acts exclusively on Arg residues, since it cannot phosphorylate Tyr, Ser, Thr, His, Asp and Lys. Has no free arginine kinase activity. This chain is Protein-arginine kinase, found in Geobacillus stearothermophilus (Bacillus stearothermophilus).